The chain runs to 348 residues: tRNA pseudouridine synthase D (348 aa).

Asp-84 serves as the catalytic Nucleophile. Residues Gly-162 to Leu-308 enclose the TRUD domain.

The protein belongs to the pseudouridine synthase TruD family.

It catalyses the reaction uridine(13) in tRNA = pseudouridine(13) in tRNA. Responsible for synthesis of pseudouridine from uracil-13 in transfer RNAs. The protein is tRNA pseudouridine synthase D of Chromohalobacter salexigens (strain ATCC BAA-138 / DSM 3043 / CIP 106854 / NCIMB 13768 / 1H11).